Here is a 316-residue protein sequence, read N- to C-terminus: CD276 antigen (316 aa).

The first 28 residues, 1–28 (MLRGWGGPSVGVSMGTALGVLCLCLTGA), serve as a signal peptide directing secretion. The Ig-like V-type domain occupies 29-139 (VEVQVSEDPV…DSAAVSLQVA (111 aa)). Topologically, residues 29–248 (VEVQVSEDPV…GQPMTFPPEA (220 aa)) are extracellular. Residues Asn-104, Asn-189, and Asn-215 are each glycosylated (N-linked (GlcNAc...) asparagine). Positions 145–238 (PSMTLEPNKD…QDAHGSVTIT (94 aa)) constitute an Ig-like C2-type domain. A disulfide bridge connects residues Cys-165 and Cys-220. Residues 249 to 269 (LWVTVGLSVCLVILLVALAFV) form a helical membrane-spanning segment. Residues 270 to 316 (CWRKIKQSCEEENAGAEDQDGDGEGSKTALRPLKHSENKEDDGQEIA) are Cytoplasmic-facing. Residues 281 to 292 (ENAGAEDQDGDG) are compositionally biased toward acidic residues. The interval 281–316 (ENAGAEDQDGDGEGSKTALRPLKHSENKEDDGQEIA) is disordered.

The protein belongs to the immunoglobulin superfamily. BTN/MOG family. In terms of assembly, interacts with TREML2 and this interaction enhances T-cell activation.

It is found in the membrane. In terms of biological role, modulates T-cell-mediated immune responses and the development of acute and chronic transplant rejection. May play a positive regulatory role in bone formation and has a dual role in the bone-immune interface. Induces antitumor immunity as it activates both acquired and innate immunity leading to natural killer cell and CD8 T-cell dependent killing of tumor cells. This Rattus norvegicus (Rat) protein is CD276 antigen (Cd276).